The chain runs to 86 residues: Weak neurotoxin 8 (86 aa).

A signal peptide spans 1-21 (MKTLLLTLVVVTIVCLDLGYT). Cystine bridges form between cysteine 24–cysteine 45, cysteine 27–cysteine 32, cysteine 38–cysteine 63, cysteine 67–cysteine 78, and cysteine 79–cysteine 84.

Belongs to the three-finger toxin family. Ancestral subfamily. Orphan group II sub-subfamily. In terms of tissue distribution, expressed by the venom gland.

The protein localises to the secreted. Functionally, binds with low affinity to muscular (alpha-1-beta-1-delta-epsilon/CHRNA1-CHRNB1-CHRND-CHRNE) and very low affinity to neuronal (alpha-7/CHRNA7) nicotinic acetylcholine receptor (nAChR). The sequence is that of Weak neurotoxin 8 from Naja sputatrix (Malayan spitting cobra).